Consider the following 152-residue polypeptide: SsrA-binding protein (152 aa).

It belongs to the SmpB family.

The protein resides in the cytoplasm. In terms of biological role, required for rescue of stalled ribosomes mediated by trans-translation. Binds to transfer-messenger RNA (tmRNA), required for stable association of tmRNA with ribosomes. tmRNA and SmpB together mimic tRNA shape, replacing the anticodon stem-loop with SmpB. tmRNA is encoded by the ssrA gene; the 2 termini fold to resemble tRNA(Ala) and it encodes a 'tag peptide', a short internal open reading frame. During trans-translation Ala-aminoacylated tmRNA acts like a tRNA, entering the A-site of stalled ribosomes, displacing the stalled mRNA. The ribosome then switches to translate the ORF on the tmRNA; the nascent peptide is terminated with the 'tag peptide' encoded by the tmRNA and targeted for degradation. The ribosome is freed to recommence translation, which seems to be the essential function of trans-translation. The chain is SsrA-binding protein from Rickettsia canadensis (strain McKiel).